The primary structure comprises 1528 residues: Multidrug resistance-associated protein 1 (1528 aa).

Topologically, residues 1–33 are extracellular; that stretch reads MALRSFCSADGSDPLWDWNVTWHTSNPDFTKCF. Asn19 carries N-linked (GlcNAc...) asparagine glycosylation. Residues 34–54 form a helical membrane-spanning segment; the sequence is QNTVLTWVPCFYLWSCFPLYF. The Cytoplasmic segment spans residues 55 to 74; it reads FYLSRHDRGYIQMTHLNKTK. Residues 75-95 form a helical membrane-spanning segment; that stretch reads TALGFFLWIICWADLFYSFWE. Topologically, residues 96–100 are extracellular; sequence RSQGV. Residues 101–121 form a helical membrane-spanning segment; that stretch reads LRAPVLLVSPTLLGITMLLAT. Residues 122-133 lie on the Cytoplasmic side of the membrane; sequence FLIQLERRKGVQ. A helical transmembrane segment spans residues 134 to 154; it reads SSGIMLTFWLVALLCALAILR. Over 155 to 172 the chain is Extracellular; sequence SKIISALKKDAHVDVFRD. Residues 173 to 193 form a helical membrane-spanning segment; sequence STFYLYFTLVLVQLVLSCFSD. Residues 194-317 are Cytoplasmic-facing; sequence CSPLFSETVH…KDREPSLFKV (124 aa). Phosphotyrosine is present on Tyr277. At Ser290 the chain carries Phosphoserine. Residues 318–338 form a helical membrane-spanning segment; sequence LYKTFGPYFLMSFLYKALHDL. Residues 326 to 609 form the ABC transmembrane type-1 1 domain; that stretch reads FLMSFLYKAL…LPMVISSIVQ (284 aa). The Extracellular portion of the chain corresponds to 339 to 364; it reads MMFAGPKILELIINFVNDREAPDWQG. A helical transmembrane segment spans residues 365–385; the sequence is YFYTALLFVSACLQTLALHQY. Over 386-441 the chain is Cytoplasmic; the sequence is FHICFVSGMRIKTAVVGAVYRKALLITNAARKSSTVGEIVNLMSVDAQRFMDLATY. The chain crosses the membrane as a helical span at residues 442–462; it reads INMIWSAPLQVILALYFLWLS. The Extracellular portion of the chain corresponds to 463 to 465; the sequence is LGP. A helical membrane pass occupies residues 466–486; sequence SVLAGVAVMILMVPLNAVMAM. The Cytoplasmic portion of the chain corresponds to 487-548; the sequence is KTKTYQVAHM…VLKKSAYLAA (62 aa). The residue at position 504 (Lys504) is an N6-succinyllysine. The helical transmembrane segment at 549-569 threads the bilayer; that stretch reads VGTFTWVCTPFLVALSTFAVF. Over 570–591 the chain is Extracellular; sequence VTVDERNILDAKKAFVSLALFN. The helical transmembrane segment at 592–612 threads the bilayer; it reads ILRFPLNILPMVISSIVQASV. At 613-963 the chain is on the cytoplasmic side; the sequence is SLKRLRIFLS…VQLSVYWNYM (351 aa). Residues 644–868 enclose the ABC transporter 1 domain; that stretch reads ITVKNATFTW…DGAFAEFLRT (225 aa). 678 to 685 lines the ATP pocket; it reads GQVGCGKS. Disordered stretches follow at residues 876–895 and 909–929; these read LASEDDSVSGSGKESKPVEN and RHLSNSSSHSGDTSQQHSSIA. Residues Ser878, Ser882, Ser912, and Ser927 each carry the phosphoserine modification. Polar residues predominate over residues 910–929; sequence HLSNSSSHSGDTSQQHSSIA. Residues 964 to 984 form a helical membrane-spanning segment; sequence KAIGLFITFLSIFLFLCNHVS. Residues 971–1253 form the ABC transmembrane type-1 2 domain; that stretch reads TFLSIFLFLC…LVRMSSEMET (283 aa). The Extracellular portion of the chain corresponds to 985 to 1022; it reads ALASNYWLSLWTDDPPVVNGTQANRNFRLSVYGALGIL. The N-linked (GlcNAc...) asparagine glycan is linked to Asn1003. The chain crosses the membrane as a helical span at residues 1023 to 1043; it reads QGAAIFGYSMAVSIGGIFASR. The Cytoplasmic portion of the chain corresponds to 1044–1086; it reads RLHLDLLYNVLRSPMSFFERTPSGNLVNRFSKELDTVDSMIPQ. A helical membrane pass occupies residues 1087-1107; that stretch reads VIKMFMGSLFSVIGAVIIILL. Residue Ala1108 is a topological domain, extracellular. Residues 1109 to 1129 form a helical membrane-spanning segment; sequence TPIAAVIIPPLGLVYFFVQRF. The Cytoplasmic segment spans residues 1130–1200; the sequence is YVASSRQLKR…VANRWLAVRL (71 aa). The chain crosses the membrane as a helical span at residues 1201 to 1221; sequence ECVGNCIVLFAALFAVISRHS. The Extracellular portion of the chain corresponds to 1222-1223; the sequence is LS. The helical transmembrane segment at 1224-1244 threads the bilayer; sequence AGLVGLSVSYSLQITAYLNWL. The Cytoplasmic segment spans residues 1245 to 1528; the sequence is VRMSSEMETN…YSMAKDAGLV (284 aa). The ABC transporter 2 domain maps to 1290-1524; it reads VEFRDYCLRY…RGIFYSMAKD (235 aa). 1324–1331 lines the ATP pocket; that stretch reads GRTGAGKS.

The protein belongs to the ABC transporter superfamily. ABCC family. Conjugate transporter (TC 3.A.1.208) subfamily.

It is found in the cell membrane. It localises to the basolateral cell membrane. The catalysed reaction is ATP + H2O + xenobioticSide 1 = ADP + phosphate + xenobioticSide 2.. It carries out the reaction an S-substituted glutathione(in) + ATP + H2O = an S-substituted glutathione(out) + ADP + phosphate + H(+). The enzyme catalyses leukotriene C4(in) + ATP + H2O = leukotriene C4(out) + ADP + phosphate + H(+). It catalyses the reaction sphing-4-enine 1-phosphate(in) + ATP + H2O = sphing-4-enine 1-phosphate(out) + ADP + phosphate + H(+). The catalysed reaction is 17beta-estradiol 17-O-(beta-D-glucuronate)(in) + ATP + H2O = 17beta-estradiol 17-O-(beta-D-glucuronate)(out) + ADP + phosphate + H(+). It carries out the reaction vincristine(in) + ATP + H2O = vincristine(out) + ADP + phosphate + H(+). The enzyme catalyses daunorubicin(in) + ATP + H2O = daunorubicin(out) + ADP + phosphate + H(+). It catalyses the reaction 2',3'-cGAMP(in) + ATP + H2O = 2',3'-cGAMP(out) + ADP + phosphate + H(+). The catalysed reaction is S-[(2E,6E,10E)-geranylgeranyl]-L-glutathione(in) + ATP + H2O = S-[(2E,6E,10E)-geranylgeranyl]-L-glutathione(out) + ADP + phosphate + H(+). It carries out the reaction prostaglandin A2-S-(R)-glutathione(in) + ATP + H2O = prostaglandin A2-S-(R)-glutathione(out) + ADP + phosphate + H(+). The enzyme catalyses prostaglandin A2-S-(S)-glutathione(in) + ATP + H2O = prostaglandin A2-S-(S)-glutathione(out) + ADP + phosphate + H(+). Its activity is regulated as follows. MK 571 inhibits sphingosine 1-phosphate and leukotriene C4 export. Mediates export of organic anions and drugs from the cytoplasm. Mediates ATP-dependent transport of glutathione and glutathione conjugates, leukotriene C4, estradiol-17-beta-o-glucuronide, methotrexate, antiviral drugs and other xenobiotics. Confers resistance to anticancer drugs by decreasing accumulation of drugs in cells, and by mediating ATP- and GSH-dependent drug export. Hydrolyzes ATP with low efficiency. Catalyzes the export of sphingosine 1-phosphate from mast cells independently of their degranulation. Participates in inflammatory response by allowing export of leukotriene C4 from leukotriene C4-synthesizing cells. Mediates ATP-dependent, GSH-independent cyclic GMP-AMP (cGAMP) export. Thus, by limiting intracellular cGAMP concentrations negatively regulates the cGAS-STING pathway. Exports S-geranylgeranyl-glutathione (GGG) in lymphoid cells and stromal compartments of lymphoid organs. ABCC1 (via extracellular transport) with GGT5 (via GGG catabolism) establish GGG gradients within lymphoid tissues to position P2RY8-positive lymphocytes at germinal centers in lymphoid follicles and restrict their chemotactic transmigration from blood vessels to the bone marrow parenchyma. Mediates basolateral export of GSH-conjugated R- and S-prostaglandin A2 diastereomers in polarized epithelial cells. This is Multidrug resistance-associated protein 1 from Mus musculus (Mouse).